Here is a 237-residue protein sequence, read N- to C-terminus: Ubiquitin-conjugating enzyme E2 34 (237 aa).

A UBC core domain is found at 5–162 (ACIKRLQKEY…FPEYVEKYNQ (158 aa)). Catalysis depends on Cys-87, which acts as the Glycyl thioester intermediate. Positions 168–207 (QATTQLTTPESPQKSDTKVESEKTIDPTKGDSEGGLKERK) are disordered. Positions 180-204 (QKSDTKVESEKTIDPTKGDSEGGLK) are enriched in basic and acidic residues. The helical transmembrane segment at 214–234 (LPAWIILLLVSVFGVVMALPL) threads the bilayer.

It belongs to the ubiquitin-conjugating enzyme family.

It is found in the membrane. It carries out the reaction S-ubiquitinyl-[E1 ubiquitin-activating enzyme]-L-cysteine + [E2 ubiquitin-conjugating enzyme]-L-cysteine = [E1 ubiquitin-activating enzyme]-L-cysteine + S-ubiquitinyl-[E2 ubiquitin-conjugating enzyme]-L-cysteine.. Its pathway is protein modification; protein ubiquitination. Its function is as follows. Accepts the ubiquitin from the E1 complex and catalyzes its covalent attachment to other proteins. In Arabidopsis thaliana (Mouse-ear cress), this protein is Ubiquitin-conjugating enzyme E2 34 (UBC34).